An 803-amino-acid polypeptide reads, in one-letter code: Ribonuclease II, chloroplastic/mitochondrial (803 aa).

A chloroplast and mitochondrion-targeting transit peptide spans 1–35; that stretch reads MMSVRAINGCSIIRTATSAGGPPVSLFRHRIQRLR. Positions 399 to 694 constitute an RNB domain; that stretch reads RIDLTHLKVY…AHYQIKAFLR (296 aa).

It belongs to the RNR ribonuclease family. As to expression, expressed in seedlings, roots, leaves and flowers.

It is found in the mitochondrion. The protein resides in the plastid. It localises to the chloroplast. The catalysed reaction is Exonucleolytic cleavage in the 3'- to 5'-direction to yield nucleoside 5'-phosphates.. 3'-5' exoribonuclease that catalyzes 3' maturation of chloroplast and mitochondrion ribosomal RNAs; degrades short nucleotidic extensions to generate the mature 3'-ends. Involved in the maturation of 23S, 16S and 5S rRNAs. In Arabidopsis thaliana (Mouse-ear cress), this protein is Ribonuclease II, chloroplastic/mitochondrial (RNR1).